The sequence spans 298 residues: tRNA dimethylallyltransferase (298 aa).

Position 10–17 (10–17 (GATATGKS)) interacts with ATP. Position 12-17 (12-17 (TATGKS)) interacts with substrate. The segment at 35–38 (DSRQ) is interaction with substrate tRNA.

This sequence belongs to the IPP transferase family. Monomer. The cofactor is Mg(2+).

It carries out the reaction adenosine(37) in tRNA + dimethylallyl diphosphate = N(6)-dimethylallyladenosine(37) in tRNA + diphosphate. In terms of biological role, catalyzes the transfer of a dimethylallyl group onto the adenine at position 37 in tRNAs that read codons beginning with uridine, leading to the formation of N6-(dimethylallyl)adenosine (i(6)A). The sequence is that of tRNA dimethylallyltransferase from Picosynechococcus sp. (strain ATCC 27264 / PCC 7002 / PR-6) (Agmenellum quadruplicatum).